A 90-amino-acid chain; its full sequence is Small ribosomal subunit protein uS15 (90 aa).

The protein belongs to the universal ribosomal protein uS15 family. As to quaternary structure, part of the 30S ribosomal subunit. Forms a bridge to the 50S subunit in the 70S ribosome, contacting the 23S rRNA.

Functionally, one of the primary rRNA binding proteins, it binds directly to 16S rRNA where it helps nucleate assembly of the platform of the 30S subunit by binding and bridging several RNA helices of the 16S rRNA. In terms of biological role, forms an intersubunit bridge (bridge B4) with the 23S rRNA of the 50S subunit in the ribosome. This is Small ribosomal subunit protein uS15 from Campylobacter concisus (strain 13826).